The primary structure comprises 332 residues: Ribose operon repressor (332 aa).

Positions alanine 2–valine 56 constitute an HTH lacI-type domain. The H-T-H motif DNA-binding region spans methionine 4–asparagine 23.

In terms of biological role, transcriptional repressor for the ribose rbsDACBK operon. This chain is Ribose operon repressor (rbsR), found in Haemophilus influenzae (strain ATCC 51907 / DSM 11121 / KW20 / Rd).